Reading from the N-terminus, the 805-residue chain is MAYNHKDIEQKWQQFWSDNETFKTVEDADKPKYYALDMFPYPSGQGLHVGHPEGYTATDIMSRMKRMQGYKVLHPMGWDAFGLPAEQYAMKTGNNPRDFTAKNIQNFKRQIQSLGFSYDWSREVNTTDPAYYKWTQWIFEQLYKKGLAYEKETLVNWAPDLMGGTVVANEEVVDGKTERGGFPVYRKPMKQWILKITAYADRLIDDLDLVDWPDSIKEMQKNWIGRSVGASVFFNVEDSEKQIEVFTTRPDTLFGATYLVISPEHDLVDQITTPESKAAVEEYKKAVATKSDLERTDLNKDKTGVFTGAYAVNPVNGKKIPVWISDYVLASYGTGAVMAVPAHDGRDYEFAKKFKIDMVPVYEGGNLEDGVLDSEGGLINSGFLDGMDKQTAIDTMISWLEEHGVGHKKVNYRLRDWVFSRQRYWGEPIPVIHWEDGETTLIPEDELPLRLPAATDIRPSGTGESPLANLDDWVNVVDENGRKGRRETNTMPQWAGSSWYFLRYVDPKNDQKIADEDLLKEWLPVDLYVGGAEHAVLHLLYARFWHKVLYDLGVVPTKEPFQKLVNQGMILGSNHEKMSKSKGNVVNPDDIVERFGADTLRLYEMFMGPLTESVAWSEDGLNGSRKWIDRVWRLMIDDENQLRDHIVTENDGSLDMIYNQTVKKVTDDYENMRFNTAISQMMVFVNEAYKADKLPAVYMEGLVKMLAPIIPHVAEELWSLLGHEGGISYAEWPTYDESKLVEATVQVILQVNGKVRSKITVDKDIAKEELEKLALADAKIQQWTADKTVRKVIVIPNKIVNIVVG.

A 'HIGH' region motif is present at residues 40 to 51 (PYPSGQGLHVGH). The 'KMSKS' region motif lies at 577 to 581 (KMSKS). Residue Lys-580 participates in ATP binding.

Belongs to the class-I aminoacyl-tRNA synthetase family.

It localises to the cytoplasm. It carries out the reaction tRNA(Leu) + L-leucine + ATP = L-leucyl-tRNA(Leu) + AMP + diphosphate. This is Leucine--tRNA ligase from Pediococcus pentosaceus (strain ATCC 25745 / CCUG 21536 / LMG 10740 / 183-1w).